The sequence spans 260 residues: UPF0246 protein APJL_0596 (260 aa).

The protein belongs to the UPF0246 family.

The polypeptide is UPF0246 protein APJL_0596 (Actinobacillus pleuropneumoniae serotype 3 (strain JL03)).